A 490-amino-acid chain; its full sequence is Protein nucleotidyltransferase YdiU (490 aa).

8 residues coordinate ATP: Gly-94, Gly-96, Arg-97, Lys-117, Asp-129, Gly-130, Arg-180, and Arg-187. The active-site Proton acceptor is the Asp-256. Asn-257 and Asp-266 together coordinate Mg(2+). ATP is bound at residue Asp-266.

This sequence belongs to the SELO family. The cofactor is Mg(2+). Mn(2+) is required as a cofactor.

It carries out the reaction L-seryl-[protein] + ATP = 3-O-(5'-adenylyl)-L-seryl-[protein] + diphosphate. The catalysed reaction is L-threonyl-[protein] + ATP = 3-O-(5'-adenylyl)-L-threonyl-[protein] + diphosphate. The enzyme catalyses L-tyrosyl-[protein] + ATP = O-(5'-adenylyl)-L-tyrosyl-[protein] + diphosphate. It catalyses the reaction L-histidyl-[protein] + UTP = N(tele)-(5'-uridylyl)-L-histidyl-[protein] + diphosphate. It carries out the reaction L-seryl-[protein] + UTP = O-(5'-uridylyl)-L-seryl-[protein] + diphosphate. The catalysed reaction is L-tyrosyl-[protein] + UTP = O-(5'-uridylyl)-L-tyrosyl-[protein] + diphosphate. Functionally, nucleotidyltransferase involved in the post-translational modification of proteins. It can catalyze the addition of adenosine monophosphate (AMP) or uridine monophosphate (UMP) to a protein, resulting in modifications known as AMPylation and UMPylation. The polypeptide is Protein nucleotidyltransferase YdiU (Clostridium beijerinckii (strain ATCC 51743 / NCIMB 8052) (Clostridium acetobutylicum)).